The primary structure comprises 145 residues: Trafficking protein particle complex subunit 1 (145 aa).

This sequence belongs to the TRAPP small subunits family. BET5 subfamily. In terms of assembly, part of the multisubunit transport protein particle (TRAPP) complex. The heterodimer TRAPPC6B-TRAPPC3 interacts with TRAPPC1 likely providing a core for TRAPP complex formation.

Its subcellular location is the golgi apparatus. It is found in the cis-Golgi network. It localises to the endoplasmic reticulum. Its function is as follows. May play a role in vesicular transport from endoplasmic reticulum to Golgi. This chain is Trafficking protein particle complex subunit 1 (TRAPPC1), found in Bos taurus (Bovine).